Here is a 394-residue protein sequence, read N- to C-terminus: Elongation factor Tu (394 aa).

In terms of domain architecture, tr-type G spans 10-205 (KPHVNIGTIG…VDNWIPLPPR (196 aa)). A G1 region spans residues 19–26 (GHVDHGKT). 19-26 (GHVDHGKT) is a binding site for GTP. Residue Thr-26 participates in Mg(2+) binding. Residues 60–64 (GITIN) form a G2 region. Residues 81–84 (DCPG) are G3. GTP is bound by residues 81 to 85 (DCPGH) and 136 to 139 (NKCD). Residues 136–139 (NKCD) are G4. Residues 174–176 (SAL) are G5.

The protein belongs to the TRAFAC class translation factor GTPase superfamily. Classic translation factor GTPase family. EF-Tu/EF-1A subfamily. As to quaternary structure, monomer.

The protein localises to the cytoplasm. It catalyses the reaction GTP + H2O = GDP + phosphate + H(+). In terms of biological role, GTP hydrolase that promotes the GTP-dependent binding of aminoacyl-tRNA to the A-site of ribosomes during protein biosynthesis. This Bacteroides thetaiotaomicron (strain ATCC 29148 / DSM 2079 / JCM 5827 / CCUG 10774 / NCTC 10582 / VPI-5482 / E50) protein is Elongation factor Tu.